The chain runs to 195 residues: MIGFAVFSSFNRFTTIFVCVLLCVVYLLSYASGEYDGRDSSSGSNNDRAPSNEFGSCTDGKCIKRTSQDITSGMWFGPRLGRRRRADRKPEINSDIEAFANAFEEPHWAIVTIPETEKRQITQFTPRLGRESGEDYFSYGFPKDQEELYTEEQIYLPLFASRLGRRVPWTPSPRLGRQLHNIVDKPRQNFNDPRF.

Residues 1–33 form the signal peptide; that stretch reads MIGFAVFSSFNRFTTIFVCVLLCVVYLLSYASG. A propeptide spanning residues 34–63 is cleaved from the precursor; that stretch reads EYDGRDSSSGSNNDRAPSNEFGSCTDGKCI. Leu80 bears the Leucine amide mark. A propeptide spanning residues 86 to 117 is cleaved from the precursor; sequence ADRKPEINSDIEAFANAFEEPHWAIVTIPETE. Residue Gln120 is modified to Pyrrolidone carboxylic acid. At Leu128 the chain carries Leucine amide. Positions 131–153 are excised as a propeptide; sequence ESGEDYFSYGFPKDQEELYTEEQ. Leu163 and Leu175 each carry leucine amide. A propeptide spanning residues 178–195 is cleaved from the precursor; the sequence is QLHNIVDKPRQNFNDPRF.

The protein belongs to the pyrokinin family.

The protein resides in the secreted. Functionally, a hormone that controls sex pheromone production in females and pheromone responsiveness in male. Also mediates visceral muscle contractile activity (myotropic activity). The polypeptide is PBAN-type neuropeptides (Apis mellifera (Honeybee)).